We begin with the raw amino-acid sequence, 804 residues long: G-type lectin S-receptor-like serine/threonine-protein kinase At1g61500 (804 aa).

The signal sequence occupies residues 1–24 (MMTRFACLHLFTMFLFTLLSGSSS). In terms of domain architecture, Bulb-type lectin spans 25 to 145 (AVITTESPLS…VSERALWQSF (121 aa)). At 25–427 (AVITTESPLS…ELDGNKRKKT (403 aa)) the chain is on the extracellular side. Residues N54, N135, and N237 are each glycosylated (N-linked (GlcNAc...) asparagine). The 37-residue stretch at 279–315 (PKKLCDFYGACGPFGLCVMSPSPMCKCFRGFVPKSVE) folds into the EGF-like; atypical domain. Intrachain disulfides connect C283-C295 and C289-C303. N321, N337, and N376 each carry an N-linked (GlcNAc...) asparagine glycan. The PAN domain maps to 334–416 (CLGNSTGEDA…GELLSIRLAR (83 aa)). Disulfide bonds link C369–C390 and C373–C379. The helical transmembrane segment at 428–448 (IVASIVSLTLFMILGFTAFGV) threads the bilayer. Topologically, residues 449–804 (WRCRVEHIAH…GMTQSVILGR (356 aa)) are cytoplasmic. A Protein kinase domain is found at 491–776 (FSLSNKLGQG…DLPSPKQPTF (286 aa)). ATP-binding positions include 497–505 (LGQGGFGSV) and K519. A phosphoserine mark is found at S525 and S540. Residues 580 to 597 (RKRLEIDWPKRFDIIQGI) form a caM-binding region. The Proton acceptor role is filled by D616. 2 positions are modified to phosphoserine: S620 and S633. T650 is modified (phosphothreonine). Phosphoserine occurs at positions 693 and 787.

This sequence belongs to the protein kinase superfamily. Ser/Thr protein kinase family.

Its subcellular location is the cell membrane. It catalyses the reaction L-seryl-[protein] + ATP = O-phospho-L-seryl-[protein] + ADP + H(+). The catalysed reaction is L-threonyl-[protein] + ATP = O-phospho-L-threonyl-[protein] + ADP + H(+). The chain is G-type lectin S-receptor-like serine/threonine-protein kinase At1g61500 from Arabidopsis thaliana (Mouse-ear cress).